Consider the following 71-residue polypeptide: MSKDDLIQFTGTVLELLPNATFRVKLENDYVIIAHTSGRMRKNRIRILLGDKVTVEMTPYDLTKGRVIHRH.

The S1-like domain occupies Met-1–His-71.

The protein belongs to the IF-1 family. In terms of assembly, component of the 30S ribosomal translation pre-initiation complex which assembles on the 30S ribosome in the order IF-2 and IF-3, IF-1 and N-formylmethionyl-tRNA(fMet); mRNA recruitment can occur at any time during PIC assembly.

Its subcellular location is the cytoplasm. Its function is as follows. One of the essential components for the initiation of protein synthesis. Stabilizes the binding of IF-2 and IF-3 on the 30S subunit to which N-formylmethionyl-tRNA(fMet) subsequently binds. Helps modulate mRNA selection, yielding the 30S pre-initiation complex (PIC). Upon addition of the 50S ribosomal subunit IF-1, IF-2 and IF-3 are released leaving the mature 70S translation initiation complex. This is Translation initiation factor IF-1 from Rickettsia felis (strain ATCC VR-1525 / URRWXCal2) (Rickettsia azadi).